Here is a 484-residue protein sequence, read N- to C-terminus: tRNA sulfurtransferase (484 aa).

One can recognise a THUMP domain in the interval glutamate 63–arginine 167. ATP-binding positions include leucine 185–isoleucine 186, lysine 267, glycine 289, and glutamine 298. A disulfide bridge links cysteine 346 with cysteine 458. The Rhodanese domain occupies valine 406 to proline 484. Cysteine 458 acts as the Cysteine persulfide intermediate in catalysis.

The protein belongs to the ThiI family.

It is found in the cytoplasm. The enzyme catalyses [ThiI sulfur-carrier protein]-S-sulfanyl-L-cysteine + a uridine in tRNA + 2 reduced [2Fe-2S]-[ferredoxin] + ATP + H(+) = [ThiI sulfur-carrier protein]-L-cysteine + a 4-thiouridine in tRNA + 2 oxidized [2Fe-2S]-[ferredoxin] + AMP + diphosphate. It carries out the reaction [ThiS sulfur-carrier protein]-C-terminal Gly-Gly-AMP + S-sulfanyl-L-cysteinyl-[cysteine desulfurase] + AH2 = [ThiS sulfur-carrier protein]-C-terminal-Gly-aminoethanethioate + L-cysteinyl-[cysteine desulfurase] + A + AMP + 2 H(+). The protein operates within cofactor biosynthesis; thiamine diphosphate biosynthesis. In terms of biological role, catalyzes the ATP-dependent transfer of a sulfur to tRNA to produce 4-thiouridine in position 8 of tRNAs, which functions as a near-UV photosensor. Also catalyzes the transfer of sulfur to the sulfur carrier protein ThiS, forming ThiS-thiocarboxylate. This is a step in the synthesis of thiazole, in the thiamine biosynthesis pathway. The sulfur is donated as persulfide by IscS. The polypeptide is tRNA sulfurtransferase (Shewanella sediminis (strain HAW-EB3)).